We begin with the raw amino-acid sequence, 99 residues long: MARSFTNVKVLSALVADGFSNTTTRHGFAAAAAATQSATRGGASIGGNMVPKSGEEKVRGGEKVSWVPDPVTGYYRPENTNEIDVADMRATVLGKKFNQ.

The tract at residues 40–62 (RGGASIGGNMVPKSGEEKVRGGE) is disordered. Residues 53–62 (SGEEKVRGGE) show a composition bias toward basic and acidic residues.

This chain is Indole-3-acetic acid-induced protein ARG2 (ARG2), found in Vigna radiata var. radiata (Mung bean).